We begin with the raw amino-acid sequence, 472 residues long: Lactate utilization protein B (472 aa).

2 4Fe-4S ferredoxin-type domains span residues 304 to 334 and 353 to 382; these read GTEF…GHSY and YDDY…LHEL. The [4Fe-4S] cluster site is built by Cys313, Cys316, Cys319, Cys323, Cys366, Cys369, and Cys373.

This sequence belongs to the LutB/YkgF family.

Its function is as follows. Is involved in L-lactate degradation and allows cells to grow with lactate as the sole carbon source. Has probably a role as an electron transporter during oxidation of L-lactate. This is Lactate utilization protein B from Anoxybacillus flavithermus (strain DSM 21510 / WK1).